A 284-amino-acid chain; its full sequence is 3-methyl-2-oxobutanoate hydroxymethyltransferase (284 aa).

Mg(2+) contacts are provided by D52 and D91. 3-methyl-2-oxobutanoate-binding positions include 52–53 (DS), D91, and K121. E123 contributes to the Mg(2+) binding site. The active-site Proton acceptor is E191.

It belongs to the PanB family. In terms of assembly, homodecamer; pentamer of dimers. The cofactor is Mg(2+).

The protein localises to the cytoplasm. The catalysed reaction is 3-methyl-2-oxobutanoate + (6R)-5,10-methylene-5,6,7,8-tetrahydrofolate + H2O = 2-dehydropantoate + (6S)-5,6,7,8-tetrahydrofolate. It functions in the pathway cofactor biosynthesis; (R)-pantothenate biosynthesis; (R)-pantoate from 3-methyl-2-oxobutanoate: step 1/2. Its function is as follows. Catalyzes the reversible reaction in which hydroxymethyl group from 5,10-methylenetetrahydrofolate is transferred onto alpha-ketoisovalerate to form ketopantoate. This chain is 3-methyl-2-oxobutanoate hydroxymethyltransferase, found in Deinococcus radiodurans (strain ATCC 13939 / DSM 20539 / JCM 16871 / CCUG 27074 / LMG 4051 / NBRC 15346 / NCIMB 9279 / VKM B-1422 / R1).